Here is a 208-residue protein sequence, read N- to C-terminus: Guanylate kinase (208 aa).

A Guanylate kinase-like domain is found at G4–Q185. Residue A11–S18 coordinates ATP.

This sequence belongs to the guanylate kinase family.

It is found in the cytoplasm. The catalysed reaction is GMP + ATP = GDP + ADP. Essential for recycling GMP and indirectly, cGMP. This Haemophilus influenzae (strain 86-028NP) protein is Guanylate kinase.